Reading from the N-terminus, the 505-residue chain is Maturase K (505 aa).

Belongs to the intron maturase 2 family. MatK subfamily.

The protein resides in the plastid. It localises to the chloroplast. In terms of biological role, usually encoded in the trnK tRNA gene intron. Probably assists in splicing its own and other chloroplast group II introns. The chain is Maturase K from Calycanthus occidentalis (Spice bush).